A 104-amino-acid chain; its full sequence is Protein EPIDERMAL PATTERNING FACTOR 1 (104 aa).

An N-terminal signal peptide occupies residues 1–20 (MKSLLLLAFFLSFFFGSLLA). 4 disulfides stabilise this stretch: C60–C94, C64–C70, C67–C96, and C79–C88. N98 is a glycosylation site (N-linked (GlcNAc...) asparagine).

Belongs to the plant cysteine rich small secretory peptide family. Epidermal patterning factor subfamily. In terms of assembly, interacts with ERECTA and ERL1, but not with TMM. Expressed in shoots, but not in roots. Mostly localized in developing leaves, specifically in meristemoids, guard mother cells (GMCs), and young guard cells.

The protein localises to the secreted. Its function is as follows. Controls stomatal patterning. Regulates asymmetric cell division during guard cell differentiation. Mediates stomatal development inhibition. Not cleaved by the protease CRSP (AC Q9LNU1). MEPF1: mobile signal controlling stomatal development in a non-cell-autonomous manner. Uses ERL1 as major receptor. May act by competing with somatogen (AC Q9SV72) for the same receptor, TMM (AC Q9SSD1). The polypeptide is Protein EPIDERMAL PATTERNING FACTOR 1 (Arabidopsis thaliana (Mouse-ear cress)).